The primary structure comprises 155 residues: Ribosomal RNA large subunit methyltransferase H (155 aa).

Residues Leu-73, Gly-104, and 123-128 contribute to the S-adenosyl-L-methionine site; that span reads LSPLTL.

It belongs to the RNA methyltransferase RlmH family. In terms of assembly, homodimer.

The protein resides in the cytoplasm. The catalysed reaction is pseudouridine(1915) in 23S rRNA + S-adenosyl-L-methionine = N(3)-methylpseudouridine(1915) in 23S rRNA + S-adenosyl-L-homocysteine + H(+). In terms of biological role, specifically methylates the pseudouridine at position 1915 (m3Psi1915) in 23S rRNA. This is Ribosomal RNA large subunit methyltransferase H from Pseudomonas putida (strain ATCC 700007 / DSM 6899 / JCM 31910 / BCRC 17059 / LMG 24140 / F1).